The chain runs to 213 residues: Protein-L-isoaspartate O-methyltransferase (213 aa).

S62 is a catalytic residue.

It belongs to the methyltransferase superfamily. L-isoaspartyl/D-aspartyl protein methyltransferase family.

The protein localises to the cytoplasm. The enzyme catalyses [protein]-L-isoaspartate + S-adenosyl-L-methionine = [protein]-L-isoaspartate alpha-methyl ester + S-adenosyl-L-homocysteine. In terms of biological role, catalyzes the methyl esterification of L-isoaspartyl residues in peptides and proteins that result from spontaneous decomposition of normal L-aspartyl and L-asparaginyl residues. It plays a role in the repair and/or degradation of damaged proteins. The sequence is that of Protein-L-isoaspartate O-methyltransferase from Idiomarina loihiensis (strain ATCC BAA-735 / DSM 15497 / L2-TR).